The sequence spans 201 residues: Recombination protein RecR (201 aa).

Residues 57–72 (CADCRTFTEQEKCNIC) form a C4-type zinc finger. Positions 81 to 176 (GQICVVESPA…DASRIAHGVP (96 aa)) constitute a Toprim domain.

This sequence belongs to the RecR family.

In terms of biological role, may play a role in DNA repair. It seems to be involved in an RecBC-independent recombinational process of DNA repair. It may act with RecF and RecO. The protein is Recombination protein RecR of Cronobacter sakazakii (strain ATCC BAA-894) (Enterobacter sakazakii).